Consider the following 99-residue polypeptide: Cell division protein FtsB (99 aa).

Residues 1–3 lie on the Cytoplasmic side of the membrane; it reads MKF. A helical transmembrane segment spans residues 4-21; sequence FVIALIVLLGLLQYRLWS. The Periplasmic portion of the chain corresponds to 22–99; sequence GDNSLPEYFV…GDRSVSSPSQ (78 aa). A coiled-coil region spans residues 31–73; sequence VLQKQIAAQQDGNAKLNERNQVLKEEIIDLKSGTEAIEERARN.

It belongs to the FtsB family. As to quaternary structure, part of a complex composed of FtsB, FtsL and FtsQ.

Its subcellular location is the cell inner membrane. In terms of biological role, essential cell division protein. May link together the upstream cell division proteins, which are predominantly cytoplasmic, with the downstream cell division proteins, which are predominantly periplasmic. The protein is Cell division protein FtsB of Shewanella sp. (strain MR-4).